Here is a 423-residue protein sequence, read N- to C-terminus: Adenylosuccinate synthetase (423 aa).

GTP contacts are provided by residues 12 to 18 and 40 to 42; these read GDEGKGK and GHT. The active-site Proton acceptor is aspartate 13. Aspartate 13 and glycine 40 together coordinate Mg(2+). Residues 13 to 16, 38 to 41, threonine 129, arginine 143, glutamine 224, threonine 239, and arginine 303 each bind IMP; these read DEGK and NAGH. Histidine 41 functions as the Proton donor in the catalytic mechanism. 299–305 contributes to the substrate binding site; the sequence is ATTGRKR. Residues arginine 305, 331 to 333, and 412 to 414 contribute to the GTP site; these read KGD and SVG.

This sequence belongs to the adenylosuccinate synthetase family. In terms of assembly, homodimer. The cofactor is Mg(2+).

It localises to the cytoplasm. The catalysed reaction is IMP + L-aspartate + GTP = N(6)-(1,2-dicarboxyethyl)-AMP + GDP + phosphate + 2 H(+). Its pathway is purine metabolism; AMP biosynthesis via de novo pathway; AMP from IMP: step 1/2. Functionally, plays an important role in the de novo pathway of purine nucleotide biosynthesis. Catalyzes the first committed step in the biosynthesis of AMP from IMP. This Christiangramia forsetii (strain DSM 17595 / CGMCC 1.15422 / KT0803) (Gramella forsetii) protein is Adenylosuccinate synthetase.